We begin with the raw amino-acid sequence, 808 residues long: Phospholipase D alpha 1 (808 aa).

Residues 1–125 (MAQILLHGTL…LEGEEIDKWV (125 aa)) enclose the C2 domain. D186 is a binding site for Ca(2+). The 39-residue stretch at 326 to 364 (TMFTHHQKIVVVDSELPSGESEKRRILSFVGGIDLCDGR) folds into the PLD phosphodiesterase 1 domain. Residues H331, K333, and D338 contribute to the active site. H331 contacts a 1,2-diacyl-sn-glycero-3-phosphate. Residues H370 and H404 each coordinate Ca(2+). 2 residues coordinate a 1,2-diacyl-sn-glycero-3-phosphate: Q520 and H659. Positions 654 to 681 (FMIYVHSKMMIVDDEYIIVGSANINQRS) constitute a PLD phosphodiesterase 2 domain. Residues H659, K661, and D666 contribute to the active site. A Ca(2+)-binding site is contributed by E720.

Belongs to the phospholipase D family. C2-PLD subfamily. Requires Ca(2+) as cofactor.

The catalysed reaction is a 1,2-diacyl-sn-glycero-3-phosphocholine + H2O = a 1,2-diacyl-sn-glycero-3-phosphate + choline + H(+). Hydrolyzes glycerol-phospholipids at the terminal phosphodiesteric bond. Plays an important role in various cellular processes. This chain is Phospholipase D alpha 1 (PLD1), found in Nicotiana tabacum (Common tobacco).